The following is a 526-amino-acid chain: Nitrogenase iron-iron protein alpha chain (526 aa).

[8Fe-7S] cluster-binding residues include cysteine 49, cysteine 75, and cysteine 138. Positions 257 and 423 each coordinate [8Fe-9S-C-homocitryl] cluster. Residues 507–526 (RNQPMPPSRKLRDAVQPAAE) are disordered.

It belongs to the NifD/NifK/NifE/NifN family. As to quaternary structure, hexamer of two alpha, two beta, and two delta chains. [8Fe-7S] cluster serves as cofactor. Requires [8Fe-9S-C-homocitryl] cluster as cofactor.

It carries out the reaction N2 + 8 reduced [2Fe-2S]-[ferredoxin] + 16 ATP + 16 H2O = H2 + 8 oxidized [2Fe-2S]-[ferredoxin] + 2 NH4(+) + 16 ADP + 16 phosphate + 6 H(+). Its function is as follows. This iron-iron protein is part of the nitrogenase complex that catalyzes the key enzymatic reactions in nitrogen fixation. Other nitrogenase complexes utilize a molybdenum-iron protein or a vanadium-iron protein. The sequence is that of Nitrogenase iron-iron protein alpha chain (anfD) from Rhodobacter capsulatus (Rhodopseudomonas capsulata).